A 194-amino-acid chain; its full sequence is MTILIQQYTNDENKKLELNNISKLLQNRIILFSQTVDDEICNSIVGQLLYLENEDSTKDIRLFINSPGGSVTAGLSVYDTIQNLSVDVSTICFGLAASMGAVLLAAGVENKRFAFASSRIMIHQPLSKVEAPWSHLDIQIRNGAYFKNLLNNILSFHTKQELKQIETDTERDFFLSATEAKQYGIIDHIFINNN.

S98 (nucleophile) is an active-site residue. H123 is a catalytic residue.

Belongs to the peptidase S14 family. As to quaternary structure, component of the chloroplastic Clp protease core complex.

It is found in the plastid. It localises to the cyanelle. It catalyses the reaction Hydrolysis of proteins to small peptides in the presence of ATP and magnesium. alpha-casein is the usual test substrate. In the absence of ATP, only oligopeptides shorter than five residues are hydrolyzed (such as succinyl-Leu-Tyr-|-NHMec, and Leu-Tyr-Leu-|-Tyr-Trp, in which cleavage of the -Tyr-|-Leu- and -Tyr-|-Trp bonds also occurs).. Its function is as follows. Cleaves peptides in various proteins in a process that requires ATP hydrolysis. Has a chymotrypsin-like activity. Plays a major role in the degradation of misfolded proteins. This Cyanophora paradoxa protein is ATP-dependent Clp protease proteolytic subunit (clpP-A).